A 160-amino-acid chain; its full sequence is Cytochrome b6-f complex subunit 4 (160 aa).

3 helical membrane passes run 36–56 (LLYI…GLAV), 95–115 (LLGV…PFLE), and 131–151 (TVFL…ALPI).

It belongs to the cytochrome b family. PetD subfamily. The 4 large subunits of the cytochrome b6-f complex are cytochrome b6, subunit IV (17 kDa polypeptide, petD), cytochrome f and the Rieske protein, while the 4 small subunits are petG, petL, petM and petN. The complex functions as a dimer.

The protein localises to the plastid. Its subcellular location is the chloroplast thylakoid membrane. In terms of biological role, component of the cytochrome b6-f complex, which mediates electron transfer between photosystem II (PSII) and photosystem I (PSI), cyclic electron flow around PSI, and state transitions. This chain is Cytochrome b6-f complex subunit 4, found in Marchantia polymorpha (Common liverwort).